A 553-amino-acid polypeptide reads, in one-letter code: Arginine--tRNA ligase (553 aa).

A 'HIGH' region motif is present at residues 132–140 (PTGDLHIGH).

It belongs to the class-I aminoacyl-tRNA synthetase family. Monomer.

The protein resides in the cytoplasm. It carries out the reaction tRNA(Arg) + L-arginine + ATP = L-arginyl-tRNA(Arg) + AMP + diphosphate. In Staphylococcus aureus (strain N315), this protein is Arginine--tRNA ligase.